A 123-amino-acid polypeptide reads, in one-letter code: Large ribosomal subunit protein uL29 (123 aa).

It belongs to the universal ribosomal protein uL29 family. In terms of assembly, component of the large ribosomal subunit.

The protein resides in the cytoplasm. Component of the large ribosomal subunit. The ribosome is a large ribonucleoprotein complex responsible for the synthesis of proteins in the cell. This chain is Large ribosomal subunit protein uL29 (rpl35), found in Hippocampus comes (Tiger tail seahorse).